The sequence spans 323 residues: Methenyltetrahydromethanopterin cyclohydrolase (323 aa).

Belongs to the MCH family.

The protein localises to the cytoplasm. The catalysed reaction is 5,10-methenyl-5,6,7,8-tetrahydromethanopterin + H2O = N(5)-formyl-5,6,7,8-tetrahydromethanopterin + H(+). Its pathway is one-carbon metabolism; methanogenesis from CO(2); 5,10-methenyl-5,6,7,8-tetrahydromethanopterin from CO(2): step 3/3. In terms of biological role, catalyzes the reversible interconversion of 5-formyl-H(4)MPT to methenyl-H(4)MPT(+). The chain is Methenyltetrahydromethanopterin cyclohydrolase from Methanococcus maripaludis (strain C5 / ATCC BAA-1333).